The chain runs to 68 residues: Tetrahydromethanopterin S-methyltransferase subunit F (68 aa).

The helical transmembrane segment at 45–65 (IAIGFLLAVLLVGVPAMMSIL) threads the bilayer.

This sequence belongs to the MtrF family. In terms of assembly, the complex is composed of 8 subunits; MtrA, MtrB, MtrC, MtrD, MtrE, MtrF, MtrG and MtrH.

It is found in the cell membrane. The catalysed reaction is 5-methyl-5,6,7,8-tetrahydromethanopterin + coenzyme M + 2 Na(+)(in) = 5,6,7,8-tetrahydromethanopterin + methyl-coenzyme M + 2 Na(+)(out). It functions in the pathway one-carbon metabolism; methanogenesis from CO(2); methyl-coenzyme M from 5,10-methylene-5,6,7,8-tetrahydromethanopterin: step 2/2. Functionally, part of a complex that catalyzes the formation of methyl-coenzyme M and tetrahydromethanopterin from coenzyme M and methyl-tetrahydromethanopterin. This is an energy-conserving, sodium-ion translocating step. This Methanothermobacter marburgensis (strain ATCC BAA-927 / DSM 2133 / JCM 14651 / NBRC 100331 / OCM 82 / Marburg) (Methanobacterium thermoautotrophicum) protein is Tetrahydromethanopterin S-methyltransferase subunit F (mtrF).